Consider the following 593-residue polypeptide: MFPLRAQSASLGANSTLFFRAYAVSHRKSGSKIQAWKGLKRGANGANRANGTNSSQPESQSSKAVFQSGKFSQLHQPSKKVYEKSSSGLDSISTFEQLRIFPTVRAAMVAEIKSTYNMKGPRYQSKDELVLKPTPIQVAAIRKINQPRLKNNKNVKEEEVSAGRKSAPSTADLVNEEFKKINSLQKLKVFTLAAETGSGKTWAYLSSLLSKLKEDEFGLYESSEEKYRASRNAQMVKSVVLVPTHDLVEQVYSTLERANSIKFDVEKIGANSRLKEFLQLPEQNGSLNLSILKWGSGEAHKKLFDRCLKGRVDVLVTTPGKLASLSKLQNVNRPYRFLNHVEYCVLDEADTLMDESWIETTMPVIEKFKKLRDLIICSATIPKRFQTTLNRIFPTDDSIINIVTPSLHKLPKQIKVSVIDSELSPYHGSKTRALAQALYAITRDGTEPGLVKRVIVFVNKKESVNSLVDTLVNKFSHRPEDVIGITGEDKPEERSEKLEPFIKPAESIEEDPLNSKIKVLVTSDLMARGVNFVGIKNVIIMDIPHNSVDLVHRIGRTGRMNQSGRVILIVDKKKNKAWLSGLPNAVKRGIQMG.

The N-terminal 106 residues, 1–106, are a transit peptide targeting the mitochondrion; the sequence is MFPLRAQSAS…QLRIFPTVRA (106 aa). Low complexity predominate over residues 42–51; the sequence is GANGANRANG. The tract at residues 42–63 is disordered; the sequence is GANGANRANGTNSSQPESQSSK. Over residues 52–63 the composition is skewed to polar residues; sequence TNSSQPESQSSK. Residues 130–137 carry the Q motif motif; that stretch reads VLKPTPIQ. The Helicase ATP-binding domain maps to 181–399; that stretch reads INSLQKLKVF…NRIFPTDDSI (219 aa). 194 to 201 lines the ATP pocket; it reads AETGSGKT. Positions 347 to 350 match the DEAD box motif; sequence DEAD. The 161-residue stretch at 433–593 folds into the Helicase C-terminal domain; that stretch reads ALAQALYAIT…NAVKRGIQMG (161 aa).

This sequence belongs to the DEAD box helicase family. MRH4 subfamily.

It localises to the mitochondrion. It carries out the reaction ATP + H2O = ADP + phosphate + H(+). In terms of biological role, ATP-binding RNA helicase involved in mitochondrial RNA metabolism. Required for maintenance of mitochondrial DNA. The chain is ATP-dependent RNA helicase MRH4, mitochondrial (MRH4) from Scheffersomyces stipitis (strain ATCC 58785 / CBS 6054 / NBRC 10063 / NRRL Y-11545) (Yeast).